A 332-amino-acid chain; its full sequence is Glycerol-3-phosphate dehydrogenase [NAD(P)+] (332 aa).

4 residues coordinate NADPH: Ser-14, Trp-15, Arg-35, and Lys-107. Sn-glycerol 3-phosphate-binding residues include Lys-107, Gly-137, and Ser-139. Residue Ala-141 participates in NADPH binding. Residues Lys-192, Asp-245, Ser-255, Arg-256, and Asn-257 each contribute to the sn-glycerol 3-phosphate site. Catalysis depends on Lys-192, which acts as the Proton acceptor. Arg-256 serves as a coordination point for NADPH. Residues Val-280 and Glu-282 each contribute to the NADPH site.

It belongs to the NAD-dependent glycerol-3-phosphate dehydrogenase family.

The protein resides in the cytoplasm. It carries out the reaction sn-glycerol 3-phosphate + NAD(+) = dihydroxyacetone phosphate + NADH + H(+). The catalysed reaction is sn-glycerol 3-phosphate + NADP(+) = dihydroxyacetone phosphate + NADPH + H(+). Its pathway is membrane lipid metabolism; glycerophospholipid metabolism. In terms of biological role, catalyzes the reduction of the glycolytic intermediate dihydroxyacetone phosphate (DHAP) to sn-glycerol 3-phosphate (G3P), the key precursor for phospholipid synthesis. The chain is Glycerol-3-phosphate dehydrogenase [NAD(P)+] from Desulfovibrio desulfuricans (strain ATCC 27774 / DSM 6949 / MB).